A 195-amino-acid polypeptide reads, in one-letter code: Imidazoleglycerol-phosphate dehydratase (195 aa).

This sequence belongs to the imidazoleglycerol-phosphate dehydratase family.

The protein localises to the cytoplasm. The enzyme catalyses D-erythro-1-(imidazol-4-yl)glycerol 3-phosphate = 3-(imidazol-4-yl)-2-oxopropyl phosphate + H2O. It functions in the pathway amino-acid biosynthesis; L-histidine biosynthesis; L-histidine from 5-phospho-alpha-D-ribose 1-diphosphate: step 6/9. This Methylorubrum extorquens (strain CM4 / NCIMB 13688) (Methylobacterium extorquens) protein is Imidazoleglycerol-phosphate dehydratase.